The following is a 248-amino-acid chain: Cutinase cut1 (248 aa).

A signal peptide spans 1–17 (MRSLSLFTALLAGQAFA). A disulfide bridge connects residues Cys79 and Cys153. The active-site Nucleophile is Ser164. A disulfide bridge connects residues Cys212 and Cys219. Residue Asp216 is part of the active site. The active-site Proton donor/acceptor is the His229.

This sequence belongs to the cutinase family. The 2 disulfide bonds play a critical role in holding the catalytic residues in juxta-position; reduction of the disulfide bridges results in the complete inactivation of the enzyme.

Its subcellular location is the secreted. It carries out the reaction cutin + H2O = cutin monomers.. In terms of biological role, catalyzes the hydrolysis of complex carboxylic polyesters found in the cell wall of plants. May degrade cutin, a macromolecule that forms the structure of the plant cuticle. May also degrade suberin, a specialized macromolecule found in the cell wall of various plant tissues. This Trichoderma harzianum (Hypocrea lixii) protein is Cutinase cut1.